The following is a 309-amino-acid chain: Metal ABC transporter substrate-binding lipoprotein FimA (309 aa).

A signal peptide spans 1 to 20 (MKKIASVLALFVALLFGLLA). Residue Cys-21 is the site of N-palmitoyl cysteine attachment. Residue Cys-21 is the site of S-diacylglycerol cysteine attachment. Residues His-67, His-139, Glu-205, and Asp-280 each contribute to the a divalent metal cation site.

This sequence belongs to the bacterial solute-binding protein 9 family. Lipoprotein receptor antigen (Lrai) subfamily.

The protein resides in the cell membrane. Functionally, part of an ATP-binding cassette (ABC) transport system involved in metal import. Binds a metal with high affinity and specificity and delivers it to the membrane permease for translocation into the cytoplasm. Also acts as an adhesin which is involved on adherence to extracellular matrix. It is an important factor in pathogenesis and infection. May contribute to the formation and accumulation of dental plaque. The polypeptide is Metal ABC transporter substrate-binding lipoprotein FimA (fimA) (Streptococcus parasanguinis).